The primary structure comprises 356 residues: Probable dual-specificity RNA methyltransferase RlmN (356 aa).

The active-site Proton acceptor is Glu100. Positions Thr106–Asp340 constitute a Radical SAM core domain. The cysteines at positions 113 and 345 are disulfide-linked. [4Fe-4S] cluster-binding residues include Cys120, Cys124, and Cys127. S-adenosyl-L-methionine is bound by residues Gly167–Glu168, Ser197, Ser226–His228, and Asn302. Cys345 acts as the S-methylcysteine intermediate in catalysis.

Belongs to the radical SAM superfamily. RlmN family. The cofactor is [4Fe-4S] cluster.

It is found in the cytoplasm. The enzyme catalyses adenosine(2503) in 23S rRNA + 2 reduced [2Fe-2S]-[ferredoxin] + 2 S-adenosyl-L-methionine = 2-methyladenosine(2503) in 23S rRNA + 5'-deoxyadenosine + L-methionine + 2 oxidized [2Fe-2S]-[ferredoxin] + S-adenosyl-L-homocysteine. It catalyses the reaction adenosine(37) in tRNA + 2 reduced [2Fe-2S]-[ferredoxin] + 2 S-adenosyl-L-methionine = 2-methyladenosine(37) in tRNA + 5'-deoxyadenosine + L-methionine + 2 oxidized [2Fe-2S]-[ferredoxin] + S-adenosyl-L-homocysteine. Functionally, specifically methylates position 2 of adenine 2503 in 23S rRNA and position 2 of adenine 37 in tRNAs. The protein is Probable dual-specificity RNA methyltransferase RlmN of Prochlorococcus marinus (strain MIT 9303).